The primary structure comprises 331 residues: HTH-type transcriptional regulator GntR (331 aa).

Positions Pro6–Asn60 constitute an HTH lacI-type domain. The segment at residues Leu8–Arg27 is a DNA-binding region (H-T-H motif).

It functions in the pathway carbohydrate acid metabolism; D-gluconate degradation [regulation]. Its function is as follows. Negative regulator for the gluconate utilization system GNT-I, the gntUKR operon. The chain is HTH-type transcriptional regulator GntR (gntR) from Escherichia coli O6:H1 (strain CFT073 / ATCC 700928 / UPEC).